We begin with the raw amino-acid sequence, 334 residues long: Holliday junction branch migration complex subunit RuvB (334 aa).

Positions 4–186 (ADRLIAPISN…FGIVQRLEYY (183 aa)) are large ATPase domain (RuvB-L). ATP-binding positions include I25, R26, G67, K70, T71, T72, 133-135 (EDY), R176, Y186, and R223. T71 is a Mg(2+) binding site. The tract at residues 187–257 (KVADLQHIVQ…TADRALNMLD (71 aa)) is small ATPAse domain (RuvB-S). The interval 260 to 334 (HQGFDYMDRK…RAYLHFGIEK (75 aa)) is head domain (RuvB-H). DNA contacts are provided by R315 and R320.

The protein belongs to the RuvB family. As to quaternary structure, homohexamer. Forms an RuvA(8)-RuvB(12)-Holliday junction (HJ) complex. HJ DNA is sandwiched between 2 RuvA tetramers; dsDNA enters through RuvA and exits via RuvB. An RuvB hexamer assembles on each DNA strand where it exits the tetramer. Each RuvB hexamer is contacted by two RuvA subunits (via domain III) on 2 adjacent RuvB subunits; this complex drives branch migration. In the full resolvosome a probable DNA-RuvA(4)-RuvB(12)-RuvC(2) complex forms which resolves the HJ.

It is found in the cytoplasm. It carries out the reaction ATP + H2O = ADP + phosphate + H(+). Its function is as follows. The RuvA-RuvB-RuvC complex processes Holliday junction (HJ) DNA during genetic recombination and DNA repair, while the RuvA-RuvB complex plays an important role in the rescue of blocked DNA replication forks via replication fork reversal (RFR). RuvA specifically binds to HJ cruciform DNA, conferring on it an open structure. The RuvB hexamer acts as an ATP-dependent pump, pulling dsDNA into and through the RuvAB complex. RuvB forms 2 homohexamers on either side of HJ DNA bound by 1 or 2 RuvA tetramers; 4 subunits per hexamer contact DNA at a time. Coordinated motions by a converter formed by DNA-disengaged RuvB subunits stimulates ATP hydrolysis and nucleotide exchange. Immobilization of the converter enables RuvB to convert the ATP-contained energy into a lever motion, pulling 2 nucleotides of DNA out of the RuvA tetramer per ATP hydrolyzed, thus driving DNA branch migration. The RuvB motors rotate together with the DNA substrate, which together with the progressing nucleotide cycle form the mechanistic basis for DNA recombination by continuous HJ branch migration. Branch migration allows RuvC to scan DNA until it finds its consensus sequence, where it cleaves and resolves cruciform DNA. The chain is Holliday junction branch migration complex subunit RuvB from Vibrio cholerae serotype O1 (strain ATCC 39541 / Classical Ogawa 395 / O395).